The following is a 30-amino-acid chain: GLPTCGETCFGGTCNTPGCTCDPWPVCTHN.

Positions 1 to 30 (GLPTCGETCFGGTCNTPGCTCDPWPVCTHN) form a cross-link, cyclopeptide (Gly-Asn). 3 disulfide bridges follow: cysteine 5-cysteine 19, cysteine 9-cysteine 21, and cysteine 14-cysteine 27.

In terms of processing, this is a cyclic peptide. In terms of tissue distribution, expressed in leaves but not in petals, petioles, roots and runners (at protein level).

Probably participates in a plant defense mechanism. Has hemolytic activity. In Viola odorata (Sweet violet), this protein is Cycloviolacin-O24.